The primary structure comprises 81 residues: Acyl carrier protein (81 aa).

Residues 1–79 (MDREEILQKI…EAVDYVVEHQ (79 aa)) enclose the Carrier domain. Serine 39 is subject to O-(pantetheine 4'-phosphoryl)serine.

Belongs to the acyl carrier protein (ACP) family. Post-translationally, 4'-phosphopantetheine is transferred from CoA to a specific serine of apo-ACP by AcpS. This modification is essential for activity because fatty acids are bound in thioester linkage to the sulfhydryl of the prosthetic group.

It localises to the cytoplasm. It participates in lipid metabolism; fatty acid biosynthesis. In terms of biological role, carrier of the growing fatty acid chain in fatty acid biosynthesis. This chain is Acyl carrier protein, found in Rubrobacter xylanophilus (strain DSM 9941 / JCM 11954 / NBRC 16129 / PRD-1).